Consider the following 128-residue polypeptide: NADH-quinone oxidoreductase subunit A (128 aa).

Helical transmembrane passes span 9–29 (FPIA…LALA), 68–88 (LLFI…VLLL), and 96–116 (LGWA…AGLV).

Belongs to the complex I subunit 3 family. In terms of assembly, NDH-1 is composed of 14 different subunits. Subunits NuoA, H, J, K, L, M, N constitute the membrane sector of the complex.

The protein resides in the cell inner membrane. It catalyses the reaction a quinone + NADH + 5 H(+)(in) = a quinol + NAD(+) + 4 H(+)(out). Its function is as follows. NDH-1 shuttles electrons from NADH, via FMN and iron-sulfur (Fe-S) centers, to quinones in the respiratory chain. The immediate electron acceptor for the enzyme in this species is believed to be ubiquinone. Couples the redox reaction to proton translocation (for every two electrons transferred, four hydrogen ions are translocated across the cytoplasmic membrane), and thus conserves the redox energy in a proton gradient. The protein is NADH-quinone oxidoreductase subunit A of Anaeromyxobacter sp. (strain Fw109-5).